Here is a 635-residue protein sequence, read N- to C-terminus: CCR4-NOT transcription complex subunit 10 (635 aa).

The residue at position 45 (Thr-45) is a Phosphothreonine. Positions 131–165 (LVARLEALEKAMAALVATLQLQLLLATNQLNRAEA) form a coiled coil. 2 disordered regions span residues 396-416 (EERQSQSETPSTKPYAPQSAG) and 450-474 (SEDVEAPEPKDPTQESWRHPQDNNF). Residues 456–470 (PEPKDPTQESWRHPQ) are compositionally biased toward basic and acidic residues.

It belongs to the CNOT10 family. In terms of assembly, component of the CCR4-NOT complex. CNOT10 and CNOT11 form a subcomplex docked to the CNOT1 scaffold.

It is found in the cytoplasm. It localises to the nucleus. Its function is as follows. Component of the CCR4-NOT complex which is one of the major cellular mRNA deadenylases and is linked to various cellular processes including bulk mRNA degradation, miRNA-mediated repression, translational repression during translational initiation and general transcription regulation. Additional complex functions may be a consequence of its influence on mRNA expression. Is not required for association of CNOT7 to the CCR4-NOT complex. In Drosophila melanogaster (Fruit fly), this protein is CCR4-NOT transcription complex subunit 10 (Not10).